The chain runs to 707 residues: MNYSLFISCAKGLEYLLEDELKGLGLHVTQVSPQGVYGEASLPVIYNLCLWSRLANRIQLILFSGHAAKEQAVHQLCTDFHWQTVFTHDKTIAIEFHGASEQIRNTMFGAQIVKDGIVDHFRRLNGSRPSVDKEKPQILIHAHLKNDILTVSFDLVGYSLHQRGYRKKAGKAPLKENVAAAMLLRAKWPELAAQGYGLHDPFCGSGTLVIEAAMMAAHIAPGLLRQDQSLQYWARHQSSLWEKLRTQALQQVKPLAVKLVGTDTDSKVVALARSNAERAGVLPLVEFNTLSLNACRPGTKRGLVVCNPPYGERLGEVTQLVPLYQQLGTTLHTCYQGWQAAILTSSPVLAKALGLRADKQYTLYNGPLECKLYCLTLSAANKLKNTPNAPLSDNAQMLFNRLEKNRNHLQKWARKNQITCYRIYDADLPEYAYAIDIYNDYAVLQEYAPPASIPVHKAEKRSLEMLQVVPRALGIHPEKLIVKQRKQQKGSEQYQKIGKTSQRQIVTEGKAKLIVNLYDYLDTGLFLDHRLMRLKFAQLEQGTRFLNCFCYTASASVHAALAGALTTNVDLSKTYLLWAEDNFRLNDINLSKHQFLQYDCKEWMKTTRDKFDVIFLDPPSFSNSKRMSDILDIQRDHVSLINMAMRLLNPDGVLYFSTNLRQFKLEPMLKEKYAVQDITPQTIDQDFKRNSKIHHCFKIVMPHFADN.

One can recognise a THUMP domain in the interval 44 to 155; that stretch reads VIYNLCLWSR…NDILTVSFDL (112 aa).

It belongs to the methyltransferase superfamily. RlmKL family.

Its subcellular location is the cytoplasm. It carries out the reaction guanosine(2445) in 23S rRNA + S-adenosyl-L-methionine = N(2)-methylguanosine(2445) in 23S rRNA + S-adenosyl-L-homocysteine + H(+). It catalyses the reaction guanosine(2069) in 23S rRNA + S-adenosyl-L-methionine = N(2)-methylguanosine(2069) in 23S rRNA + S-adenosyl-L-homocysteine + H(+). Functionally, specifically methylates the guanine in position 2445 (m2G2445) and the guanine in position 2069 (m7G2069) of 23S rRNA. This Legionella pneumophila (strain Lens) protein is Ribosomal RNA large subunit methyltransferase K/L.